A 20-amino-acid chain; its full sequence is Non-specific lipid-transfer protein (20 aa).

It belongs to the plant LTP family. In terms of tissue distribution, leaf.

Plant non-specific lipid-transfer proteins transfer phospholipids as well as galactolipids across membranes. May play a role in wax or cutin deposition in the cell walls of expanding epidermal cells and certain secretory tissues. This chain is Non-specific lipid-transfer protein, found in Cannabis sativa (Hemp).